We begin with the raw amino-acid sequence, 319 residues long: GATA transcription factor 18 (319 aa).

The span at 1–15 shows a compositional bias: low complexity; sequence MPDAAAAAAAAQDAD. The interval 1–74 is disordered; it reads MPDAAAAAAA…AAPEPVSALL (74 aa). Positions 32–60 are enriched in acidic residues; it reads NNDDDGDDGTEEDEEEDDDEEGDEEELPP. The region spanning 74–109 is the Tify domain; it reads LPGSPNQLTLLFQGEVYVFESVTPEKVQAVLLLLGS. Residues 143 to 185 enclose the CCT domain; sequence RVASLIRFREKRKERNFDKKIRYAVRKEVALRMQRRKGQFAGR. The GATA-type zinc finger occupies 215-242; sequence CQNCGTSEKMTPAMRRGPAGPRTLCNAC. The disordered stretch occupies residues 292-319; the sequence is ITASHGEVMGDSTPANEAEIGAPKAQSQ.

Belongs to the type IV zinc-finger family. Class C subfamily.

It is found in the nucleus. Its function is as follows. Transcriptional activator that specifically binds 5'-GATA-3' or 5'-GAT-3' motifs within gene promoters. This is GATA transcription factor 18 from Oryza sativa subsp. indica (Rice).